We begin with the raw amino-acid sequence, 428 residues long: Dihydroorotase (428 aa).

Residues His61 and His63 each coordinate Zn(2+). Substrate is bound by residues 63–65 (HLR) and Asn95. 3 residues coordinate Zn(2+): Asp153, His180, and His233. Asn279 serves as a coordination point for substrate. Asp306 contributes to the Zn(2+) binding site. Asp306 is an active-site residue. Substrate contacts are provided by residues His310 and 324–325 (FG).

This sequence belongs to the metallo-dependent hydrolases superfamily. DHOase family. Class I DHOase subfamily. Zn(2+) serves as cofactor.

The enzyme catalyses (S)-dihydroorotate + H2O = N-carbamoyl-L-aspartate + H(+). It participates in pyrimidine metabolism; UMP biosynthesis via de novo pathway; (S)-dihydroorotate from bicarbonate: step 3/3. In terms of biological role, catalyzes the reversible cyclization of carbamoyl aspartate to dihydroorotate. This chain is Dihydroorotase, found in Geobacillus thermodenitrificans (strain NG80-2).